Consider the following 605-residue polypeptide: Mini-chromosome maintenance complex-binding protein (605 aa).

Phosphoserine occurs at positions 147 and 150.

The protein belongs to the MCMBP family. Interacts with the MCM complex.

It is found in the nucleus. In terms of biological role, associated component of the MCM complex that acts as a regulator of DNA replication. Binds to the MCM complex during late S phase and may act by promoting the disassembly of the MCM complex from chromatin. The protein is Mini-chromosome maintenance complex-binding protein of Drosophila melanogaster (Fruit fly).